Here is a 150-residue protein sequence, read N- to C-terminus: UPF0208 membrane protein VC_1099 (150 aa).

2 consecutive transmembrane segments (helical) span residues 42–62 (FAIK…MVFA) and 70–90 (AIVV…WLGH).

The protein belongs to the UPF0208 family.

The protein resides in the cell inner membrane. The sequence is that of UPF0208 membrane protein VC_1099 from Vibrio cholerae serotype O1 (strain ATCC 39315 / El Tor Inaba N16961).